The following is a 269-amino-acid chain: Undecaprenyl-diphosphatase (269 aa).

Transmembrane regions (helical) follow at residues 41–61, 78–98, 107–127, 148–167, 184–204, 213–233, and 248–268; these read FATMFEIVIQLGAILAVVFHY, GFNLWFKIFIAFIPAAVIGLL, LFSPFTVAIALIAGAIMMIVI, SLLIGIAQVMSLFPGMSRSA, AEFSFFLAIPTMFAATTLSLL, LEWQALAVGFITSFLTALFVV, and FAYYRLAVGVLMILLVAEKIV.

It belongs to the UppP family.

It is found in the cell membrane. The enzyme catalyses di-trans,octa-cis-undecaprenyl diphosphate + H2O = di-trans,octa-cis-undecaprenyl phosphate + phosphate + H(+). Functionally, catalyzes the dephosphorylation of undecaprenyl diphosphate (UPP). Confers resistance to bacitracin. This is Undecaprenyl-diphosphatase from Thermoanaerobacter pseudethanolicus (strain ATCC 33223 / 39E) (Clostridium thermohydrosulfuricum).